The sequence spans 293 residues: 4-hydroxy-tetrahydrodipicolinate synthase 1 (293 aa).

Pyruvate is bound at residue Thr46. Tyr134 acts as the Proton donor/acceptor in catalysis. Lys162 serves as the catalytic Schiff-base intermediate with substrate. Residue Ile204 coordinates pyruvate.

The protein belongs to the DapA family. As to quaternary structure, homotetramer; dimer of dimers.

The protein resides in the cytoplasm. The catalysed reaction is L-aspartate 4-semialdehyde + pyruvate = (2S,4S)-4-hydroxy-2,3,4,5-tetrahydrodipicolinate + H2O + H(+). It participates in amino-acid biosynthesis; L-lysine biosynthesis via DAP pathway; (S)-tetrahydrodipicolinate from L-aspartate: step 3/4. In terms of biological role, catalyzes the condensation of (S)-aspartate-beta-semialdehyde [(S)-ASA] and pyruvate to 4-hydroxy-tetrahydrodipicolinate (HTPA). This chain is 4-hydroxy-tetrahydrodipicolinate synthase 1, found in Clostridium acetobutylicum (strain ATCC 824 / DSM 792 / JCM 1419 / IAM 19013 / LMG 5710 / NBRC 13948 / NRRL B-527 / VKM B-1787 / 2291 / W).